The primary structure comprises 660 residues: Peroxisomal acyl-coenzyme A oxidase 1 (660 aa).

The residue at position 26 (serine 26) is a Phosphoserine. N6-succinyllysine occurs at positions 89 and 90. Threonine 139 and glycine 178 together coordinate FAD. Lysine 216 carries the N6-acetyllysine modification. N6-succinyllysine is present on lysine 241. Lysine 255, lysine 267, and lysine 272 each carry N6-acetyllysine. Residue lysine 349 is modified to N6-succinyllysine. Catalysis depends on glutamate 421, which acts as the Proton acceptor. Residues lysine 437 and lysine 446 each carry the N6-acetyllysine; alternate modification. 2 positions are modified to N6-succinyllysine; alternate: lysine 437 and lysine 446. Lysine 500 carries the N6-acetyllysine modification. Residue lysine 512 is modified to N6-acetyllysine; alternate. N6-succinyllysine; alternate is present on lysine 512. Lysine 542 carries the N6-succinyllysine modification. Lysine 637 is modified (N6-acetyllysine; alternate). Lysine 637 bears the N6-succinyllysine; alternate mark. The residue at position 643 (lysine 643) is an N6-succinyllysine. At serine 649 the chain carries Phosphoserine. Lysine 651 carries the post-translational modification N6-acetyllysine. Lysine 654 is subject to N6-succinyllysine. The short motif at 658–660 (SKL) is the Microbody targeting signal element.

It belongs to the acyl-CoA oxidase family. In terms of assembly, homodimer. Interacts with LONP2. FAD serves as cofactor.

It is found in the peroxisome. The catalysed reaction is a 2,3-saturated acyl-CoA + O2 = a (2E)-enoyl-CoA + H2O2. The enzyme catalyses hexadecanoyl-CoA + O2 = (2E)-hexadecenoyl-CoA + H2O2. It catalyses the reaction dodecanoyl-CoA + O2 = (2E)-dodecenoyl-CoA + H2O2. It carries out the reaction octanoyl-CoA + O2 = (2E)-octenoyl-CoA + H2O2. The catalysed reaction is decanoyl-CoA + O2 = (2E)-decenoyl-CoA + H2O2. The enzyme catalyses tetradecanoyl-CoA + O2 = (2E)-tetradecenoyl-CoA + H2O2. It catalyses the reaction hexadecanedioyl-CoA + O2 = (2E)-hexadecenedioyl-CoA + H2O2. It carries out the reaction tetracosanoyl-CoA + O2 = (2E)-tetracosenoyl-CoA + H2O2. The catalysed reaction is glutaryl-CoA + O2 = (2E)-glutaconyl-CoA + H2O2. The enzyme catalyses hexanoyl-CoA + O2 = (2E)-hexenoyl-CoA + H2O2. It catalyses the reaction octadecanoyl-CoA + O2 = (2E)-octadecenoyl-CoA + H2O2. It carries out the reaction (5Z,8Z,11Z,14Z,17Z)-eicosapentaenoyl-CoA + O2 = (2E,5Z,8Z,11Z,14Z,17Z)-icosahexaenoyl-CoA + H2O2. The catalysed reaction is (6Z,9Z,12Z,15Z,18Z,21Z)-tetracosahexaenoyl-CoA + O2 = (2E,6Z,9Z,12Z,15Z,18Z,21Z)-tetracosaheptaenoyl-CoA + H2O2. The protein operates within lipid metabolism; peroxisomal fatty acid beta-oxidation. In terms of biological role, involved in the initial and rate-limiting step of peroxisomal beta-oxidation of straight-chain saturated and unsaturated very-long-chain fatty acids. Catalyzes the desaturation of fatty acyl-CoAs such as palmitoyl-CoA (hexadecanoyl-CoA) to 2-trans-enoyl-CoAs ((2E)-enoyl-CoAs) such as (2E)-hexadecenoyl-CoA, and donates electrons directly to molecular oxygen (O(2)), thereby producing hydrogen peroxide (H(2)O(2)). Shows highest activity against medium-chain fatty acyl-CoAs. Shows optimum activity with a chain length of 10 carbons (decanoyl-CoA) in vitro. Functionally, is active against a much broader range of substrates and shows activity towards long-chain acyl-CoAs. The polypeptide is Peroxisomal acyl-coenzyme A oxidase 1 (Pongo abelii (Sumatran orangutan)).